The primary structure comprises 113 residues: Large ribosomal subunit protein bL19 (113 aa).

Belongs to the bacterial ribosomal protein bL19 family.

Functionally, this protein is located at the 30S-50S ribosomal subunit interface and may play a role in the structure and function of the aminoacyl-tRNA binding site. The protein is Large ribosomal subunit protein bL19 of Mycolicibacterium gilvum (strain PYR-GCK) (Mycobacterium gilvum (strain PYR-GCK)).